The primary structure comprises 204 residues: CASP-like protein 1B2 (204 aa).

The Cytoplasmic segment spans residues 1–28 (MASKGEEKPELVGSKQGIVSVTKAKHDQ). A helical transmembrane segment spans residues 29 to 49 (IVLVLRVVAFLATASATIVMG). Over 50–80 (LNQETKTLLVGTIGTTPIRATLKAKFQHTPA) the chain is Extracellular. The helical transmembrane segment at 81-101 (FVFFVVANGLASVYNLVMLGV) threads the bilayer. The Cytoplasmic segment spans residues 102–114 (DVFGRKLDCKGLR). A helical transmembrane segment spans residues 115–135 (LVIISILDMVIVAVVAAGASS). Topologically, residues 136 to 168 (AAFMAELGKNGNSHAKWNKICDKFESFCHQGGG) are extracellular. A helical transmembrane segment spans residues 169-189 (ALIPSFIALLLLFLISAISII). At 190 to 204 (TLHNQKLTSPHATTP) the chain is on the cytoplasmic side.

This sequence belongs to the Casparian strip membrane proteins (CASP) family. Homodimer and heterodimers.

It localises to the cell membrane. The chain is CASP-like protein 1B2 from Vitis vinifera (Grape).